Here is a 434-residue protein sequence, read N- to C-terminus: Homogentisate 1,2-dioxygenase (434 aa).

His289 (proton acceptor) is an active-site residue. His332 and Glu338 together coordinate Fe cation. 2 residues coordinate homogentisate: Tyr347 and His368. Fe cation is bound at residue His368.

This sequence belongs to the homogentisate dioxygenase family. As to quaternary structure, hexamer; dimer of trimers. Fe cation is required as a cofactor.

The enzyme catalyses homogentisate + O2 = 4-maleylacetoacetate + H(+). It participates in amino-acid degradation; L-phenylalanine degradation; acetoacetate and fumarate from L-phenylalanine: step 4/6. Its function is as follows. Involved in the catabolism of homogentisate (2,5-dihydroxyphenylacetate or 2,5-OH-PhAc), a central intermediate in the degradation of phenylalanine and tyrosine. Catalyzes the oxidative ring cleavage of the aromatic ring of homogentisate to yield maleylacetoacetate. This chain is Homogentisate 1,2-dioxygenase, found in Pseudomonas syringae pv. tomato (strain ATCC BAA-871 / DC3000).